A 369-amino-acid polypeptide reads, in one-letter code: UDP-N-acetylglucosamine--N-acetylmuramyl-(pentapeptide) pyrophosphoryl-undecaprenol N-acetylglucosamine transferase (369 aa).

UDP-N-acetyl-alpha-D-glucosamine contacts are provided by residues 10–12 (TGG), Asn124, Arg166, Ser196, and Gln300.

Belongs to the glycosyltransferase 28 family. MurG subfamily.

It is found in the cell membrane. The enzyme catalyses di-trans,octa-cis-undecaprenyl diphospho-N-acetyl-alpha-D-muramoyl-L-alanyl-D-glutamyl-meso-2,6-diaminopimeloyl-D-alanyl-D-alanine + UDP-N-acetyl-alpha-D-glucosamine = di-trans,octa-cis-undecaprenyl diphospho-[N-acetyl-alpha-D-glucosaminyl-(1-&gt;4)]-N-acetyl-alpha-D-muramoyl-L-alanyl-D-glutamyl-meso-2,6-diaminopimeloyl-D-alanyl-D-alanine + UDP + H(+). It participates in cell wall biogenesis; peptidoglycan biosynthesis. Functionally, cell wall formation. Catalyzes the transfer of a GlcNAc subunit on undecaprenyl-pyrophosphoryl-MurNAc-pentapeptide (lipid intermediate I) to form undecaprenyl-pyrophosphoryl-MurNAc-(pentapeptide)GlcNAc (lipid intermediate II). This chain is UDP-N-acetylglucosamine--N-acetylmuramyl-(pentapeptide) pyrophosphoryl-undecaprenol N-acetylglucosamine transferase, found in Desulfitobacterium hafniense (strain Y51).